Consider the following 123-residue polypeptide: Small ribosomal subunit protein uS13 (123 aa).

Residues 95-123 form a disordered region; sequence GLPVRGQSSKTNARTRKGPRRSVMSRKKK. The segment covering 107 to 123 has biased composition (basic residues); that stretch reads ARTRKGPRRSVMSRKKK.

Belongs to the universal ribosomal protein uS13 family. In terms of assembly, part of the 30S ribosomal subunit. Forms a loose heterodimer with protein S19. Forms two bridges to the 50S subunit in the 70S ribosome.

Functionally, located at the top of the head of the 30S subunit, it contacts several helices of the 16S rRNA. In the 70S ribosome it contacts the 23S rRNA (bridge B1a) and protein L5 of the 50S subunit (bridge B1b), connecting the 2 subunits; these bridges are implicated in subunit movement. Contacts the tRNAs in the A and P-sites. In Maridesulfovibrio salexigens (strain ATCC 14822 / DSM 2638 / NCIMB 8403 / VKM B-1763) (Desulfovibrio salexigens), this protein is Small ribosomal subunit protein uS13.